The following is a 445-amino-acid chain: MKKAFVKSYGCQMNAYDAARMADVLGAEGYTATDTVEDADVVVLNTCHIREKAAEKVYSELGRLRVLKGERKAQGLDTRIVVAGCVAQAEGAEIQARQPAVDVVVGPQSYHRLPDLLARSRERRVVDTEFPVEDKFDHLPRRRTLGASAFLTVQEGCDKFCAFCVVPYTRGAEVSRSVAAVLAEAEKLADGGVREITLIGQNVNAYHGDGPDGAPAGLADLVRAVAKIPGIARIRYTTSHPNDFDDALIRAHAEVPALMPYLHLPVQSGSDRILAAMNRKHTGDAYRRLIDRIRAARPDIALSSDFIVGFPGETDADFAETLRLVRDVGFESAFSFKYSTRPGTPAADRTDQVPEAVMAARLAELQALLDSQRHAYQRAAAGRVFDVLVEKRGRHPGQVAGKTPHLLAVQFDAAPHHIGQVVPVRITEAGSNSLFGELVSEAAAA.

The region spanning 2–122 (KKAFVKSYGC…LPDLLARSRE (121 aa)) is the MTTase N-terminal domain. [4Fe-4S] cluster-binding residues include C11, C47, C85, C157, C161, and C164. In terms of domain architecture, Radical SAM core spans 143–378 (RTLGASAFLT…LDSQRHAYQR (236 aa)). The TRAM domain maps to 378-440 (RAAAGRVFDV…SNSLFGELVS (63 aa)).

It belongs to the methylthiotransferase family. MiaB subfamily. In terms of assembly, monomer. Requires [4Fe-4S] cluster as cofactor.

The protein resides in the cytoplasm. The enzyme catalyses N(6)-dimethylallyladenosine(37) in tRNA + (sulfur carrier)-SH + AH2 + 2 S-adenosyl-L-methionine = 2-methylsulfanyl-N(6)-dimethylallyladenosine(37) in tRNA + (sulfur carrier)-H + 5'-deoxyadenosine + L-methionine + A + S-adenosyl-L-homocysteine + 2 H(+). Catalyzes the methylthiolation of N6-(dimethylallyl)adenosine (i(6)A), leading to the formation of 2-methylthio-N6-(dimethylallyl)adenosine (ms(2)i(6)A) at position 37 in tRNAs that read codons beginning with uridine. In Methylobacterium radiotolerans (strain ATCC 27329 / DSM 1819 / JCM 2831 / NBRC 15690 / NCIMB 10815 / 0-1), this protein is tRNA-2-methylthio-N(6)-dimethylallyladenosine synthase.